The sequence spans 60 residues: Protein translocase subunit SecE (60 aa).

Residues 31–51 (VIVVSTVIFFLVFFYALDLGI) form a helical membrane-spanning segment.

Belongs to the SecE/SEC61-gamma family. In terms of assembly, component of the Sec protein translocase complex. Heterotrimer consisting of SecY, SecE and SecG subunits. The heterotrimers can form oligomers, although 1 heterotrimer is thought to be able to translocate proteins. Interacts with the ribosome. Interacts with SecDF, and other proteins may be involved. Interacts with SecA.

The protein resides in the cell membrane. Functionally, essential subunit of the Sec protein translocation channel SecYEG. Clamps together the 2 halves of SecY. May contact the channel plug during translocation. The sequence is that of Protein translocase subunit SecE from Staphylococcus aureus (strain Mu50 / ATCC 700699).